Here is a 192-residue protein sequence, read N- to C-terminus: Ion-translocating oxidoreductase complex subunit A (192 aa).

6 helical membrane passes run leucine 5–leucine 25, isoleucine 39–valine 59, leucine 65–valine 85, alanine 102–leucine 122, alanine 134–methionine 154, and alanine 171–valine 191.

It belongs to the NqrDE/RnfAE family. The complex is composed of six subunits: RnfA, RnfB, RnfC, RnfD, RnfE and RnfG.

The protein localises to the cell inner membrane. Its function is as follows. Part of a membrane-bound complex that couples electron transfer with translocation of ions across the membrane. This chain is Ion-translocating oxidoreductase complex subunit A, found in Shewanella sp. (strain ANA-3).